The primary structure comprises 113 residues: U11-theraphotoxin-Hhn1h (113 aa).

The first 21 residues, 1–21, serve as a signal peptide directing secretion; that stretch reads MNTVRVTFLLVFVLVVSLGQA. The propeptide occupies 22–74; that stretch reads DKDENRMEMQEKTEQGKSYLDFAENLLLQKLEELEAKLLEEDSEESRNSRQKR. The interval 61-83 is disordered; that stretch reads EEDSEESRNSRQKRRIGEGVPCD. 2 disulfide bridges follow: Cys-82-Cys-95 and Cys-89-Cys-110.

Belongs to the neurotoxin 14 (magi-1) family. 01 (HNTX-16) subfamily. In terms of tissue distribution, expressed by the venom gland.

Its subcellular location is the secreted. In terms of biological role, probable ion channel inhibitor. This is U11-theraphotoxin-Hhn1h from Cyriopagopus hainanus (Chinese bird spider).